A 97-amino-acid chain; its full sequence is UPF0390 protein CNBD1430 (97 aa).

Disordered stretches follow at residues 1 to 57 (MAQG…INNS) and 75 to 97 (RNVG…GKSR). A compositionally biased stretch (basic and acidic residues) spans 29–46 (GKREVAPKDRQRVLERSQ). Residues 48-57 (KQLSSKINNS) are compositionally biased toward polar residues.

It belongs to the UPF0390 family.

In Cryptococcus neoformans var. neoformans serotype D (strain B-3501A) (Filobasidiella neoformans), this protein is UPF0390 protein CNBD1430.